Reading from the N-terminus, the 277-residue chain is Undecaprenyl-diphosphatase (277 aa).

A run of 6 helical transmembrane segments spans residues 47-67 (FNII…RGKI), 85-105 (VNLL…ADLI), 108-128 (WLFN…IMLW), 183-203 (AATE…AVYS), 218-238 (VFAV…RALL), and 249-269 (FAWY…FHLI).

This sequence belongs to the UppP family.

It localises to the cell inner membrane. It catalyses the reaction di-trans,octa-cis-undecaprenyl diphosphate + H2O = di-trans,octa-cis-undecaprenyl phosphate + phosphate + H(+). Functionally, catalyzes the dephosphorylation of undecaprenyl diphosphate (UPP). Confers resistance to bacitracin. This is Undecaprenyl-diphosphatase from Pseudomonas paraeruginosa (strain DSM 24068 / PA7) (Pseudomonas aeruginosa (strain PA7)).